A 598-amino-acid polypeptide reads, in one-letter code: Rho-related protein racA (598 aa).

Position 11 to 17 (11 to 17 (DGAVGKS)) interacts with GTP. An Effector region motif is present at residues 32–40 (YVPTVFDNY). Residues 57 to 61 (DTAGQ) and 115 to 118 (TKND) each bind GTP. The tract at residues 175-210 (ASAKKKGGFFSSSSSSSSSSSSKSSEKSVPIPPVMP) is disordered. A compositionally biased stretch (low complexity) spans 182 to 197 (GFFSSSSSSSSSSSSK). 2 consecutive BTB domains span residues 239 to 344 (SDVK…NYLD) and 405 to 472 (SDIQ…PIEE).

It in the N-terminal section; belongs to the small GTPase superfamily. Rho family. As to quaternary structure, interacts with pakB.

The protein is Rho-related protein racA (racA) of Dictyostelium discoideum (Social amoeba).